Reading from the N-terminus, the 507-residue chain is FLYWCH transcription factor 1 (507 aa).

A compositionally biased stretch (low complexity) spans 1 to 26; the sequence is MYSPESMNSNISSPSPPSSSSLNAPS. A disordered region spans residues 1-51; it reads MYSPESMNSNISSPSPPSSSSLNAPSLADAPEVRSDDGEAETSEPSTSVTA. The segment at 135–192 adopts an FLYWCH-type zinc-finger fold; the sequence is KKTRLKVFSNGFFMTFDKLSSCQKKYFWRCEYKNTCKARMHTDIVTEKILTFIHEHNH.

Probable transcription factor. Binds to the DNA sequence motif 5'-[AG]GGCGCCG-3' in the promoters of target genes, including micro-RNA genes, in order to repress expression, and acting redundantly with flh-2. The polypeptide is FLYWCH transcription factor 1 (Caenorhabditis elegans).